The primary structure comprises 1405 residues: DNA-directed RNA polymerase subunit beta' (1405 aa).

Residues C71, C73, C86, and C89 each contribute to the Zn(2+) site. Mg(2+) contacts are provided by D462, D464, and D466. Residues C820, C893, C900, and C903 each contribute to the Zn(2+) site.

The protein belongs to the RNA polymerase beta' chain family. As to quaternary structure, the RNAP catalytic core consists of 2 alpha, 1 beta, 1 beta' and 1 omega subunit. When a sigma factor is associated with the core the holoenzyme is formed, which can initiate transcription. Requires Mg(2+) as cofactor. It depends on Zn(2+) as a cofactor.

The enzyme catalyses RNA(n) + a ribonucleoside 5'-triphosphate = RNA(n+1) + diphosphate. Functionally, DNA-dependent RNA polymerase catalyzes the transcription of DNA into RNA using the four ribonucleoside triphosphates as substrates. The polypeptide is DNA-directed RNA polymerase subunit beta' (Methylorubrum populi (strain ATCC BAA-705 / NCIMB 13946 / BJ001) (Methylobacterium populi)).